Reading from the N-terminus, the 189-residue chain is Gluconokinase (189 aa).

16–23 (GVSGAGKS) contacts ATP.

It belongs to the gluconokinase GntK/GntV family. As to quaternary structure, monomer.

The catalysed reaction is D-gluconate + ATP = 6-phospho-D-gluconate + ADP + H(+). The protein operates within carbohydrate acid metabolism; D-gluconate degradation. Phosphorylates gluconate to 6-phosphogluconate. In Arabidopsis thaliana (Mouse-ear cress), this protein is Gluconokinase.